A 215-amino-acid polypeptide reads, in one-letter code: Adenylate kinase (215 aa).

10-15 is an ATP binding site; sequence GAGKGT. Positions 30–59 are NMP; sequence STGDIFRKNIKEKTELGQKVEGLLAQGKLV. AMP is bound by residues T31, R36, 57–59, 85–88, and Q92; these read KLV and GFPR. Positions 126 to 163 are LID; that stretch reads GRRVCPSCGASYHIDNNPTKVDGICDACQTPVIQREDD. Position 127 (R127) interacts with ATP. Zn(2+) is bound by residues C130 and C133. 136-137 provides a ligand contact to ATP; sequence SY. 2 residues coordinate Zn(2+): C150 and C153. AMP is bound by residues R160 and R171. L199 is a binding site for ATP.

The protein belongs to the adenylate kinase family. Monomer.

It is found in the cytoplasm. It carries out the reaction AMP + ATP = 2 ADP. The protein operates within purine metabolism; AMP biosynthesis via salvage pathway; AMP from ADP: step 1/1. In terms of biological role, catalyzes the reversible transfer of the terminal phosphate group between ATP and AMP. Plays an important role in cellular energy homeostasis and in adenine nucleotide metabolism. In Finegoldia magna (strain ATCC 29328 / DSM 20472 / WAL 2508) (Peptostreptococcus magnus), this protein is Adenylate kinase.